A 225-amino-acid polypeptide reads, in one-letter code: UPF0758 protein Sputw3181_0338 (225 aa).

In terms of domain architecture, MPN spans 102–224 (VLTNPDLTRD…IVSFAERGWI (123 aa)). Residues H173, H175, and D186 each coordinate Zn(2+). A JAMM motif motif is present at residues 173-186 (HNHPSGIAEPSQAD).

It belongs to the UPF0758 family.

The chain is UPF0758 protein Sputw3181_0338 from Shewanella sp. (strain W3-18-1).